A 290-amino-acid chain; its full sequence is 33 kDa chaperonin (290 aa).

2 disulfides stabilise this stretch: Cys-236-Cys-238 and Cys-269-Cys-272.

This sequence belongs to the HSP33 family. Post-translationally, under oxidizing conditions two disulfide bonds are formed involving the reactive cysteines. Under reducing conditions zinc is bound to the reactive cysteines and the protein is inactive.

The protein resides in the cytoplasm. In terms of biological role, redox regulated molecular chaperone. Protects both thermally unfolding and oxidatively damaged proteins from irreversible aggregation. Plays an important role in the bacterial defense system toward oxidative stress. This Brevibacillus brevis (strain 47 / JCM 6285 / NBRC 100599) protein is 33 kDa chaperonin.